A 352-amino-acid chain; its full sequence is Peptide chain release factor 1 (352 aa).

Residue glutamine 233 is modified to N5-methylglutamine. The segment at 288-309 (NAKDRKEQVGSGDRSERIRTYN) is disordered. Basic and acidic residues predominate over residues 289–306 (AKDRKEQVGSGDRSERIR).

The protein belongs to the prokaryotic/mitochondrial release factor family. Methylated by PrmC. Methylation increases the termination efficiency of RF1.

The protein localises to the cytoplasm. Its function is as follows. Peptide chain release factor 1 directs the termination of translation in response to the peptide chain termination codons UAG and UAA. This chain is Peptide chain release factor 1, found in Helicobacter pylori (strain G27).